The chain runs to 336 residues: Putative cysteine synthase (336 aa).

Lys-41 is modified (N6-(pyridoxal phosphate)lysine). Pyridoxal 5'-phosphate is bound by residues Asn-71, 179-183 (GTGGS), and Ser-269.

This sequence belongs to the cysteine synthase/cystathionine beta-synthase family. It depends on pyridoxal 5'-phosphate as a cofactor.

It carries out the reaction O-acetyl-L-serine + hydrogen sulfide = L-cysteine + acetate. Its function is as follows. As it is highly similar to bacterial and plant cysteine synthases, it is possible that it catalyzes a related reaction. This chain is Putative cysteine synthase, found in Sinorhizobium fredii (strain NBRC 101917 / NGR234).